The chain runs to 127 residues: Thioredoxin domain-containing protein 8 (127 aa).

The 92-residue stretch at 1–92 (MVQIIKDTNE…SQKVTLFSRI (92 aa)) folds into the Thioredoxin domain. Cysteines 32 and 35 form a disulfide.

The protein belongs to the thioredoxin family. As to expression, testis-specific. Only expressed during spermiogenesis, prominently in the Golgi apparatus of pachytene spermatocytes and round and elongated spermatids, with a transient localization in the developing acrosome of round spermatids (at protein level).

Its subcellular location is the cytoplasm. The protein resides in the golgi apparatus. May be required for post-translational modifications of proteins required for acrosomal biogenesis. May act by reducing disulfide bonds within the sperm. This Homo sapiens (Human) protein is Thioredoxin domain-containing protein 8 (TXNDC8).